A 98-amino-acid polypeptide reads, in one-letter code: Integration host factor subunit alpha (98 aa).

The protein belongs to the bacterial histone-like protein family. As to quaternary structure, heterodimer of an alpha and a beta chain.

This protein is one of the two subunits of integration host factor, a specific DNA-binding protein that functions in genetic recombination as well as in transcriptional and translational control. The protein is Integration host factor subunit alpha of Acinetobacter baumannii (strain AB307-0294).